An 85-amino-acid polypeptide reads, in one-letter code: Large ribosomal subunit protein bL27 (85 aa).

Belongs to the bacterial ribosomal protein bL27 family.

The polypeptide is Large ribosomal subunit protein bL27 (Solibacter usitatus (strain Ellin6076)).